Consider the following 222-residue polypeptide: Hexitol phosphatase B (222 aa).

D13 serves as the catalytic Nucleophile. Residues D13 and D15 each coordinate a divalent metal cation. Substrate-binding positions include 13-15 (DMD), 115-116 (SA), and K148. The Proton donor role is filled by D15. Residue D173 participates in a divalent metal cation binding.

This sequence belongs to the HAD-like hydrolase superfamily. CbbY/CbbZ/Gph/YieH family. Mg(2+) is required as a cofactor. Requires Mn(2+) as cofactor. The cofactor is Co(2+). Zn(2+) serves as cofactor.

It carries out the reaction sugar phosphate + H2O = sugar + phosphate.. It catalyses the reaction 2-deoxy-D-glucose 6-phosphate + H2O = 2-deoxy-D-glucose + phosphate. The catalysed reaction is D-mannitol 1-phosphate + H2O = D-mannitol + phosphate. The enzyme catalyses D-sorbitol 6-phosphate + H2O = D-sorbitol + phosphate. Sugar-phosphate phosphohydrolase that catalyzes the dephosphorylation of D-mannitol 1-phosphate and D-sorbitol 6-phosphate. Also catalyzes the dephosphorylation of 2-deoxyglucose 6-phosphate (2dGlu6P); this is a biologically important activity in vivo since it contributes to the elimination of this toxic compound and plays an important role in the resistance of E.coli to 2-deoxyglucose. To a lesser extent, is also able to dephosphorylate mannose 6-phosphate (Man6P), erythrose-4-phosphate, 2-deoxyribose-5-phosphate (2dRib5P), ribose-5-phosphate (Rib5P) and glucose-6-phosphate (Glu6P) in vitro. In Escherichia coli (strain K12), this protein is Hexitol phosphatase B.